Consider the following 954-residue polypeptide: Glycine dehydrogenase (decarboxylating) (954 aa).

Lys702 is subject to N6-(pyridoxal phosphate)lysine.

The protein belongs to the GcvP family. As to quaternary structure, the glycine cleavage system is composed of four proteins: P, T, L and H. Requires pyridoxal 5'-phosphate as cofactor.

It carries out the reaction N(6)-[(R)-lipoyl]-L-lysyl-[glycine-cleavage complex H protein] + glycine + H(+) = N(6)-[(R)-S(8)-aminomethyldihydrolipoyl]-L-lysyl-[glycine-cleavage complex H protein] + CO2. Its function is as follows. The glycine cleavage system catalyzes the degradation of glycine. The P protein binds the alpha-amino group of glycine through its pyridoxal phosphate cofactor; CO(2) is released and the remaining methylamine moiety is then transferred to the lipoamide cofactor of the H protein. This is Glycine dehydrogenase (decarboxylating) from Xanthomonas euvesicatoria pv. vesicatoria (strain 85-10) (Xanthomonas campestris pv. vesicatoria).